The sequence spans 400 residues: MSESVRTNTSIWSKGMLSVIVAQFLSAFGDNALLFATLALLKAQFYPDWSQPVLQMVFVGAYILFAPFVGQIADSFAKGRVMMVANGLKLAGAAGICLGINPFVGYTLVGIGAAAYSPAKYGILGELTTGDKLVKANGMMEASTIAAILLGSVAGGVLADWHVIAALVACALAYAGAVAANLFIPKLVAARPGQSWRLSAMTRSFFSACVVLWRNGETRFSLVGTGLFWGAGVTLRFLLVLWVPVALGITDNATPTYLNAMVAVGIVVGAGAAAKLVTLETVSRCMPAGILIGVVVAIFSLQHALLPAYALLLLIGMLGGFFVVPLNALLQERGKKSVGAGNAIAVQNLGENSAMLLMLGLYSLAVLVGVPAVAIGIGFGVLFALAIAALWIWQRRQASY.

Transmembrane regions (helical) follow at residues Val19–Ala39, Val53–Ala73, Ala91–Ile111, Met139–Ala159, Ile164–Ile184, Ser195–Trp213, Leu227–Leu247, Tyr257–Val277, Thr281–Leu301, Ala304–Val324, Asn352–Ala372, and Val373–Trp393.

This sequence belongs to the major facilitator superfamily. LplT (TC 2.A.1.42) family.

The protein localises to the cell inner membrane. Catalyzes the facilitated diffusion of 2-acyl-glycero-3-phosphoethanolamine (2-acyl-GPE) into the cell. The chain is Lysophospholipid transporter LplT from Salmonella paratyphi B (strain ATCC BAA-1250 / SPB7).